We begin with the raw amino-acid sequence, 403 residues long: Flavohemoprotein (403 aa).

The Globin domain maps to 1–138; it reads MLTQKTKDIV…LADVLMGMES (138 aa). Histidine 85 provides a ligand contact to heme b. Catalysis depends on charge relay system residues tyrosine 95 and glutamate 137. The reductase stretch occupies residues 149 to 403; that stretch reads GGWKGWRTFV…EVFGPDLFAE (255 aa). An FAD-binding FR-type domain is found at 152–262; the sequence is KGWRTFVIRE…AAPYGSFHID (111 aa). Residues tyrosine 190 and 206–209 each bind FAD; that span reads RQYS. Residue 275–280 coordinates NADP(+); that stretch reads GVGLTP. 395 to 398 lines the FAD pocket; it reads VFGP.

Belongs to the globin family. Two-domain flavohemoproteins subfamily. The protein in the C-terminal section; belongs to the flavoprotein pyridine nucleotide cytochrome reductase family. As to quaternary structure, monomer. FAD serves as cofactor. It depends on heme b as a cofactor.

It localises to the cytoplasm. It carries out the reaction 2 nitric oxide + NADPH + 2 O2 = 2 nitrate + NADP(+) + H(+). The catalysed reaction is 2 nitric oxide + NADH + 2 O2 = 2 nitrate + NAD(+) + H(+). Its function is as follows. Is involved in NO detoxification in an aerobic process, termed nitric oxide dioxygenase (NOD) reaction that utilizes O(2) and NAD(P)H to convert NO to nitrate, which protects the bacterium from various noxious nitrogen compounds. Therefore, plays a central role in the inducible response to nitrosative stress. Functionally, in the presence of oxygen and NADH, FHP has NADH oxidase activity, which leads to the generation of superoxide and H(2)O(2), both in vitro and in vivo, and it has been suggested that FHP might act as an amplifier of superoxide stress. Under anaerobic conditions, FHP also exhibits nitric oxide reductase and FAD reductase activities. However, all these reactions are much lower than NOD activity. The chain is Flavohemoprotein (hmp) from Cupriavidus necator (strain ATCC 17699 / DSM 428 / KCTC 22496 / NCIMB 10442 / H16 / Stanier 337) (Ralstonia eutropha).